The primary structure comprises 176 residues: DNA-directed RNA polymerase II subunit 7 (176 aa).

Belongs to the eukaryotic RPB7/RPC8 RNA polymerase subunit family. Component of the RNA polymerase II complex consisting of at least 12 subunits. Interacts with NRPB4.

It is found in the nucleus. Functionally, DNA-dependent RNA polymerase catalyzes the transcription of DNA into RNA using the four ribonucleoside triphosphates as substrates. Component of RNA polymerase II which synthesizes mRNA precursors and many functional non-coding RNAs. Pol II is the central component of the basal RNA polymerase II transcription machinery. It is composed of mobile elements that move relative to each other. NRPB7 is part of a subcomplex with NRPB4 that binds to a pocket formed by NRPB1, NRPB2 and NRPB6 at the base of the clamp element. The NRBP4-NRPB7 subcomplex seems to lock the clamp via NRPB7 in the closed conformation thus preventing double-stranded DNA to enter the active site cleft. The NRPB4-NRPB7 subcomplex binds single-stranded DNA and RNA. The sequence is that of DNA-directed RNA polymerase II subunit 7 (NRPB7) from Arabidopsis thaliana (Mouse-ear cress).